The sequence spans 166 residues: Large ribosomal subunit protein uL10 (166 aa).

This sequence belongs to the universal ribosomal protein uL10 family. As to quaternary structure, part of the ribosomal stalk of the 50S ribosomal subunit. The N-terminus interacts with L11 and the large rRNA to form the base of the stalk. The C-terminus forms an elongated spine to which L12 dimers bind in a sequential fashion forming a multimeric L10(L12)X complex.

Its function is as follows. Forms part of the ribosomal stalk, playing a central role in the interaction of the ribosome with GTP-bound translation factors. In Shewanella baltica (strain OS223), this protein is Large ribosomal subunit protein uL10.